The chain runs to 220 residues: U1 small nuclear ribonucleoprotein C (220 aa).

The segment at phenylalanine 4–aspartate 36 adopts a Matrin-type zinc-finger fold. Residues proline 197–lysine 220 are disordered. Residues proline 208–lysine 220 are compositionally biased toward pro residues.

The protein belongs to the U1 small nuclear ribonucleoprotein C family. U1 snRNP is composed of the 7 core Sm proteins B/B', D1, D2, D3, E, F and G that assemble in a heptameric protein ring on the Sm site of the small nuclear RNA to form the core snRNP, and at least 3 U1 snRNP-specific proteins U1-70K, U1-A and U1-C. U1-C interacts with U1 snRNA and the 5' splice-site region of the pre-mRNA.

The protein resides in the nucleus. Functionally, component of the spliceosomal U1 snRNP, which is essential for recognition of the pre-mRNA 5' splice-site and the subsequent assembly of the spliceosome. U1-C is directly involved in initial 5' splice-site recognition for both constitutive and regulated alternative splicing. The interaction with the 5' splice-site seems to precede base-pairing between the pre-mRNA and the U1 snRNA. Stimulates commitment or early (E) complex formation by stabilizing the base pairing of the 5' end of the U1 snRNA and the 5' splice-site region. The chain is U1 small nuclear ribonucleoprotein C from Tuber melanosporum (strain Mel28) (Perigord black truffle).